We begin with the raw amino-acid sequence, 259 residues long: Probable ABC transporter permease protein RC0129 (259 aa).

The next 5 membrane-spanning stretches (helical) occupy residues 13-35 (TVKF…SSII), 49-69 (LFIG…SGAV), 148-168 (VITA…IGVM), 195-215 (PIDV…ISII), and 237-257 (AVVN…ELFF).

This sequence belongs to the MlaE permease family.

It localises to the cell inner membrane. Functionally, could be part of an ABC transporter complex. In Rickettsia conorii (strain ATCC VR-613 / Malish 7), this protein is Probable ABC transporter permease protein RC0129.